We begin with the raw amino-acid sequence, 127 residues long: Large ribosomal subunit protein bL12 (127 aa).

Positions 98-127 (PKPIKEGAPKAEAESLKSKLEEAGAEVELK) are disordered.

This sequence belongs to the bacterial ribosomal protein bL12 family. As to quaternary structure, homodimer. Part of the ribosomal stalk of the 50S ribosomal subunit. Forms a multimeric L10(L12)X complex, where L10 forms an elongated spine to which 2 to 4 L12 dimers bind in a sequential fashion. Binds GTP-bound translation factors.

In terms of biological role, forms part of the ribosomal stalk which helps the ribosome interact with GTP-bound translation factors. Is thus essential for accurate translation. The protein is Large ribosomal subunit protein bL12 of Amoebophilus asiaticus (strain 5a2).